The primary structure comprises 376 residues: MARPKLHDFRRIVVKVGSSLLIDSGAGEVRATWLAALAADIAELHRDGRDVMIVSSGSIALGRSRLKLPRGALKLEESQAAAAVGQIALARTWSEVLGHHGIGAGQILVTLQDTEERRRYLNARSTIAKLLEWRAVPVINENDTVATNEIRYGDNDRLAARVATMASADLLILLSDIDGLYTAPPGSNPDAKLIPVVDSVTAEIEGMAGAAGSELSRGGMRTKIEAAKIATSAGTHMLIASGKIDHPLKAIAGGGPCTWFLTPANPVTARKRWIAGSLEPKGTLTIDAGAVTALRAGKSLLPAGVIRVDGQFARGDAVIVRGPDTHEIGRGLVAYDADDADRIKGRSSPDVMSILGVSGRAEMIHRDDLVVGTAPG.

Position 15 (Lys15) interacts with ATP. Substrate is bound by residues Ser56, Asp143, and Asn155. 175 to 176 (SD) lines the ATP pocket. A PUA domain is found at 281–358 (KGTLTIDAGA…PDVMSILGVS (78 aa)).

This sequence belongs to the glutamate 5-kinase family.

The protein resides in the cytoplasm. It catalyses the reaction L-glutamate + ATP = L-glutamyl 5-phosphate + ADP. The protein operates within amino-acid biosynthesis; L-proline biosynthesis; L-glutamate 5-semialdehyde from L-glutamate: step 1/2. Catalyzes the transfer of a phosphate group to glutamate to form L-glutamate 5-phosphate. The protein is Glutamate 5-kinase of Rhodopseudomonas palustris (strain HaA2).